A 259-amino-acid chain; its full sequence is Imidazole glycerol phosphate synthase subunit HisF (259 aa).

Residues aspartate 11 and aspartate 130 contribute to the active site.

It belongs to the HisA/HisF family. Heterodimer of HisH and HisF.

It is found in the cytoplasm. The enzyme catalyses 5-[(5-phospho-1-deoxy-D-ribulos-1-ylimino)methylamino]-1-(5-phospho-beta-D-ribosyl)imidazole-4-carboxamide + L-glutamine = D-erythro-1-(imidazol-4-yl)glycerol 3-phosphate + 5-amino-1-(5-phospho-beta-D-ribosyl)imidazole-4-carboxamide + L-glutamate + H(+). Its pathway is amino-acid biosynthesis; L-histidine biosynthesis; L-histidine from 5-phospho-alpha-D-ribose 1-diphosphate: step 5/9. In terms of biological role, IGPS catalyzes the conversion of PRFAR and glutamine to IGP, AICAR and glutamate. The HisF subunit catalyzes the cyclization activity that produces IGP and AICAR from PRFAR using the ammonia provided by the HisH subunit. This chain is Imidazole glycerol phosphate synthase subunit HisF, found in Chloroflexus aurantiacus (strain ATCC 29366 / DSM 635 / J-10-fl).